Reading from the N-terminus, the 342-residue chain is Isopentenyl-diphosphate delta-isomerase (342 aa).

11-12 (RK) serves as a coordination point for substrate. FMN-binding positions include Ser68, 69–71 (SMT), Ser99, and Asn128. 99 to 101 (SQR) provides a ligand contact to substrate. A substrate-binding site is contributed by Gln162. Glu163 contributes to the Mg(2+) binding site. FMN is bound by residues Lys194, Ser219, Thr224, 275-277 (GVR), and 296-297 (AK).

This sequence belongs to the IPP isomerase type 2 family. As to quaternary structure, homooctamer. Dimer of tetramers. FMN is required as a cofactor. The cofactor is NADPH. Requires Mg(2+) as cofactor.

It is found in the cytoplasm. The enzyme catalyses isopentenyl diphosphate = dimethylallyl diphosphate. Functionally, involved in the biosynthesis of isoprenoids. Catalyzes the 1,3-allylic rearrangement of the homoallylic substrate isopentenyl (IPP) to its allylic isomer, dimethylallyl diphosphate (DMAPP). The chain is Isopentenyl-diphosphate delta-isomerase from Legionella pneumophila (strain Lens).